A 286-amino-acid polypeptide reads, in one-letter code: Polyamine aminopropyltransferase (286 aa).

The PABS domain occupies aspartate 2 to lysine 237. An S-methyl-5'-thioadenosine-binding site is contributed by glutamine 31. Aspartate 86 contributes to the spermidine binding site. S-methyl-5'-thioadenosine-binding positions include glutamate 106 and asparagine 137 to glycine 138. Aspartate 155 (proton acceptor) is an active-site residue.

The protein belongs to the spermidine/spermine synthase family. As to quaternary structure, homodimer or homotetramer.

The protein resides in the cytoplasm. The enzyme catalyses S-adenosyl 3-(methylsulfanyl)propylamine + putrescine = S-methyl-5'-thioadenosine + spermidine + H(+). It functions in the pathway amine and polyamine biosynthesis; spermidine biosynthesis; spermidine from putrescine: step 1/1. Catalyzes the irreversible transfer of a propylamine group from the amino donor S-adenosylmethioninamine (decarboxy-AdoMet) to putrescine (1,4-diaminobutane) to yield spermidine. The chain is Polyamine aminopropyltransferase from Streptococcus pneumoniae serotype 4 (strain ATCC BAA-334 / TIGR4).